An 831-amino-acid polypeptide reads, in one-letter code: DNA helicase MCM8 (831 aa).

Gly residues predominate over residues 1-20 (MSQGWRGGSGGWRGGGGGNP). The interval 1–53 (MSQGWRGGSGGWRGGGGGNPYAGAWRGRPWRGRGQGGTWSRNNGRDPVCFAPP) is disordered. The MCM domain occupies 395-602 (LFQLIVNSLC…DHDHLLSEHV (208 aa)). 447–454 (GDPGLGKS) lines the ATP pocket.

It belongs to the MCM family. In terms of assembly, component of the MCM8-MCM9 complex, which forms a hexamer composed of mcm8 and mcm9.

The protein localises to the nucleus. It catalyses the reaction ATP + H2O = ADP + phosphate + H(+). Component of the MCM8-MCM9 complex, a complex involved in homologous recombination repair following DNA interstrand cross-links and plays a key role during gametogenesis. The MCM8-MCM9 complex probably acts as a hexameric helicase required to process aberrant forks into homologous recombination substrates and to orchestrate homologous recombination with resection, fork stabilization and fork restart. In eggs, required for elongation during DNA replication by facilitating the recruitment of rpa2/rpa34 and stimulating the processivity of DNA polymerases at replication foci. Probably not required for DNA replication in other cells. The chain is DNA helicase MCM8 (mcm8) from Xenopus laevis (African clawed frog).